Reading from the N-terminus, the 180-residue chain is Bifunctional protein PyrR (180 aa).

Residues 101 to 113 (LIVVDDVLFTGRT) carry the PRPP-binding motif.

This sequence belongs to the purine/pyrimidine phosphoribosyltransferase family. PyrR subfamily. Homodimer and homohexamer; in equilibrium.

The catalysed reaction is UMP + diphosphate = 5-phospho-alpha-D-ribose 1-diphosphate + uracil. Functionally, regulates transcriptional attenuation of the pyrimidine nucleotide (pyr) operon by binding in a uridine-dependent manner to specific sites on pyr mRNA. This disrupts an antiterminator hairpin in the RNA and favors formation of a downstream transcription terminator, leading to a reduced expression of downstream genes. Also displays a weak uracil phosphoribosyltransferase activity which is not physiologically significant. The chain is Bifunctional protein PyrR from Bacillus pumilus (strain SAFR-032).